Reading from the N-terminus, the 363-residue chain is Aminopyrrolnitrin oxygenase PrnD (363 aa).

In terms of domain architecture, Rieske spans 29–137 (WYVAMRSNEL…TAERYGYVWV (109 aa)). Positions 69, 71, 88, and 91 each coordinate [2Fe-2S] cluster.

In terms of assembly, homodimer. It depends on [2Fe-2S] cluster as a cofactor. Fe cation serves as cofactor. FMN is required as a cofactor.

It catalyses the reaction aminopyrrolnitrin + NADPH + 2 O2 + H(+) = pyrrolnitrin + NADP(+) + 2 H2O. It functions in the pathway antibiotic biosynthesis. Involved in the biosynthesis of the antifungal antibiotic pyrrolnitrin (PRN). Catalyzes the oxidation of the amino group of aminopyrrolnitrin (APRN) to a nitro group to form PRN. It has high substrate specificity toward physiological substrate aminopyrrolnitrin, p-aminobenzylamine (pABA), p-aminobenzyl alcohol, and p-aminophenyl alanine. In Pseudomonas fluorescens, this protein is Aminopyrrolnitrin oxygenase PrnD (prnD).